Here is a 552-residue protein sequence, read N- to C-terminus: Cation/acetate symporter ActP (552 aa).

14 helical membrane passes run 5–25 (FMML…DALT), 35–55 (IQAI…TYWA), 78–98 (GLAI…SALV), 105–125 (GLIY…LIAE), 151–171 (LSAC…MVGA), 185–205 (VAVI…GMLA), 208–228 (WVQI…AVMV), 264–284 (ISAL…PHIL), 305–325 (GFMG…ILLV), 357–377 (FFLG…VAGL), 407–427 (VSKI…ILFE), 431–451 (IAFM…PIII), 466–486 (IGGW…PTIW), and 499–519 (YDYP…FFSI).

It belongs to the sodium:solute symporter (SSF) (TC 2.A.21) family.

The protein localises to the cell inner membrane. In terms of biological role, transports acetate. This chain is Cation/acetate symporter ActP, found in Pectobacterium carotovorum subsp. carotovorum (strain PC1).